Consider the following 394-residue polypeptide: 8-amino-7-oxononanoate synthase (394 aa).

Arg18 lines the substrate pocket. 105 to 106 (GY) contacts pyridoxal 5'-phosphate. His130 provides a ligand contact to substrate. Ser175, His203, and Thr232 together coordinate pyridoxal 5'-phosphate. Lys235 carries the post-translational modification N6-(pyridoxal phosphate)lysine. Residue Thr349 coordinates substrate.

Belongs to the class-II pyridoxal-phosphate-dependent aminotransferase family. BioF subfamily. As to quaternary structure, homodimer. It depends on pyridoxal 5'-phosphate as a cofactor.

It carries out the reaction 6-carboxyhexanoyl-[ACP] + L-alanine + H(+) = (8S)-8-amino-7-oxononanoate + holo-[ACP] + CO2. It participates in cofactor biosynthesis; biotin biosynthesis. Its function is as follows. Catalyzes the decarboxylative condensation of pimeloyl-[acyl-carrier protein] and L-alanine to produce 8-amino-7-oxononanoate (AON), [acyl-carrier protein], and carbon dioxide. The chain is 8-amino-7-oxononanoate synthase from Marinobacter nauticus (strain ATCC 700491 / DSM 11845 / VT8) (Marinobacter aquaeolei).